We begin with the raw amino-acid sequence, 476 residues long: UDP-N-acetylmuramate--L-alanine ligase (476 aa).

Residue 126–132 (GAHGKTT) participates in ATP binding.

The protein belongs to the MurCDEF family.

It is found in the cytoplasm. It catalyses the reaction UDP-N-acetyl-alpha-D-muramate + L-alanine + ATP = UDP-N-acetyl-alpha-D-muramoyl-L-alanine + ADP + phosphate + H(+). It functions in the pathway cell wall biogenesis; peptidoglycan biosynthesis. Functionally, cell wall formation. In Psychrobacter sp. (strain PRwf-1), this protein is UDP-N-acetylmuramate--L-alanine ligase.